Consider the following 296-residue polypeptide: Ribosomal protein L11 methyltransferase (296 aa).

S-adenosyl-L-methionine contacts are provided by T145, G166, D188, and N230.

Belongs to the methyltransferase superfamily. PrmA family.

It is found in the cytoplasm. It carries out the reaction L-lysyl-[protein] + 3 S-adenosyl-L-methionine = N(6),N(6),N(6)-trimethyl-L-lysyl-[protein] + 3 S-adenosyl-L-homocysteine + 3 H(+). Functionally, methylates ribosomal protein L11. The polypeptide is Ribosomal protein L11 methyltransferase (Histophilus somni (strain 129Pt) (Haemophilus somnus)).